The primary structure comprises 464 residues: Citrate synthase 5, mitochondrial (464 aa).

A mitochondrion-targeting transit peptide spans 1–25 (MVFFRSVSAISRLRSRAVQQSSLSN). Active-site residues include His300, His346, and Asp401.

It belongs to the citrate synthase family.

The protein localises to the mitochondrion matrix. The catalysed reaction is oxaloacetate + acetyl-CoA + H2O = citrate + CoA + H(+). It participates in carbohydrate metabolism; tricarboxylic acid cycle; isocitrate from oxaloacetate: step 1/2. This Arabidopsis thaliana (Mouse-ear cress) protein is Citrate synthase 5, mitochondrial (CSY5).